The chain runs to 136 residues: ATP synthase epsilon chain (136 aa).

Belongs to the ATPase epsilon chain family. As to quaternary structure, F-type ATPases have 2 components, CF(1) - the catalytic core - and CF(0) - the membrane proton channel. CF(1) has five subunits: alpha(3), beta(3), gamma(1), delta(1), epsilon(1). CF(0) has three main subunits: a, b and c.

It is found in the cell membrane. Functionally, produces ATP from ADP in the presence of a proton gradient across the membrane. This chain is ATP synthase epsilon chain, found in Exiguobacterium sp. (strain ATCC BAA-1283 / AT1b).